A 379-amino-acid polypeptide reads, in one-letter code: Chaperone protein DnaJ (379 aa).

A J domain is found at 5–70 (DYYELLEVSR…QKRAAYDQFG (66 aa)). A CR-type zinc finger spans residues 135–213 (GKEVEITVPR…CHGQGRVRES (79 aa)). Zn(2+) contacts are provided by Cys148, Cys151, Cys165, Cys168, Cys187, Cys190, Cys201, and Cys204. CXXCXGXG motif repeat units follow at residues 148–155 (CTVCEGSG), 165–172 (CETCQGMG), 187–194 (CPTCHGEG), and 201–208 (CASCHGQG).

It belongs to the DnaJ family. In terms of assembly, homodimer. Zn(2+) serves as cofactor.

The protein localises to the cytoplasm. In terms of biological role, participates actively in the response to hyperosmotic and heat shock by preventing the aggregation of stress-denatured proteins and by disaggregating proteins, also in an autonomous, DnaK-independent fashion. Unfolded proteins bind initially to DnaJ; upon interaction with the DnaJ-bound protein, DnaK hydrolyzes its bound ATP, resulting in the formation of a stable complex. GrpE releases ADP from DnaK; ATP binding to DnaK triggers the release of the substrate protein, thus completing the reaction cycle. Several rounds of ATP-dependent interactions between DnaJ, DnaK and GrpE are required for fully efficient folding. Also involved, together with DnaK and GrpE, in the DNA replication of plasmids through activation of initiation proteins. The sequence is that of Chaperone protein DnaJ from Legionella pneumophila (strain Corby).